Here is a 900-residue protein sequence, read N- to C-terminus: MSLAEDWIDPNSSEDSDIQEDAELEYTADNPEKEQRGVFSLEKVQLQFPVSIRCLAVENNILVMALTSDKLMIVDLERPEDIIDIELPKKVLALGLTYKIFLDPSGHYIFVTTTAGDNCLFTPSHQGRVLTKLKGHTVEAVQWNLNGGNILELLIASKSGVLLELVLTLDSANLKRIEKSINTLYSFPFMESPMGILKNIQDDSMTIVTNKRILRFEPKTSRGKDQLYFSPAFQGSMKEILSFSEEETAQCFSYSPFPKNLAEPYTLALKTSKRIIYLDIMNPVNPDIQDYEFNESPKLSVPTVEMNMILTSFHLAFLDLDTLYIVNRVNGKESYQQRVNLSPHEEILGLCCDHEKNTYWLYTTDSLHELVVNNETREASLVFLEKGDFEKALECANTAKVRNTVLVGYAEFLMEHEEYERAATLYAETLKSVEEVALKFIELNQKDVLRLYLWKKLRSYKSTMKIQKSLLVNWLLELMLAKLNSLDEKERLELFPENVMQQRQQVQREFSTLLNQYKDEINREAAYNLANNYGKEEQLLQIATVMKDQSYIMHYWVQRENYEKALETLNEGVSQETLIQHATALLTHRPNETVSIWERQTDLDVHALIPSLLSYNQRSHVPVEENAAIRYLRYVTGVLGCVDPSIHNTLFCIYACHSSSNESYLMNYIEQQGNHPLYDMDLGIRLCLQFNCRRSAVKILVLMKLYSQGVELALEADDCELAATIANIPEEDVVLKKTLWQTIAKYMFSKKSGIKETLRFLENSEVLQLPELIRLLPEDIKLDDLSDNVCDELDHCMKRIEQLDFEIGQASEVAHEIQTNAENMRNRYIVLEPNESCWHCNQPLFSEPFVLFPCQHAFHRSCMLEKTYKLASEKNILKECQLCGPSYAVRLINEPFSTDF.

The interval 1 to 20 (MSLAEDWIDPNSSEDSDIQE) is disordered. TPR repeat units follow at residues 314-345 (HLAF…SPHE), 373-406 (NNET…NTVL), 408-436 (GYAE…VEEV), and 546-579 (MKDQ…ETLI). A CHCR repeat occupies 602-756 (DLDVHALIPS…MFSKKSGIKE (155 aa)). The segment at 837–884 (CWHCNQPLFSEPFVLFPCQHAFHRSCMLEKTYKLASEKNILKECQLCG) adopts an RING-type; atypical zinc-finger fold.

This sequence belongs to the VPS18 family.

It localises to the vacuole membrane. Functionally, required for vacuolar biogenesis. This is Vacuolar membrane protein pep3 (pep3) from Schizosaccharomyces pombe (strain 972 / ATCC 24843) (Fission yeast).